Consider the following 92-residue polypeptide: Small ribosomal subunit protein uS19 (92 aa).

This sequence belongs to the universal ribosomal protein uS19 family.

In terms of biological role, protein S19 forms a complex with S13 that binds strongly to the 16S ribosomal RNA. The polypeptide is Small ribosomal subunit protein uS19 (Roseobacter denitrificans (strain ATCC 33942 / OCh 114) (Erythrobacter sp. (strain OCh 114))).